Consider the following 158-residue polypeptide: Putative ribosomal RNA large subunit methyltransferase H (158 aa).

S-adenosyl-L-methionine contacts are provided by residues leucine 76, glycine 107, and 126–131 (LSRMTF).

Belongs to the RNA methyltransferase RlmH family.

Its subcellular location is the cytoplasm. The enzyme catalyses pseudouridine(1915) in 23S rRNA + S-adenosyl-L-methionine = N(3)-methylpseudouridine(1915) in 23S rRNA + S-adenosyl-L-homocysteine + H(+). In terms of biological role, specifically methylates the pseudouridine at position 1915 (m3Psi1915) in 23S rRNA. In Methanocorpusculum labreanum (strain ATCC 43576 / DSM 4855 / Z), this protein is Putative ribosomal RNA large subunit methyltransferase H.